A 438-amino-acid polypeptide reads, in one-letter code: EF-hand calcium-binding domain-containing protein 3 (438 aa).

EF-hand domains lie at 47–82 (SQMAAFQDAYNFFYKDKTGCIDFHGLMCTVAKLGMN) and 83–118 (LTKHDVYNELKCADIDRDGKVNFSDFIKVLTDKNLF). Ca(2+) is bound by residues Asp-96, Asp-98, Asp-100, Lys-102, and Asp-107. The residue at position 279 (Tyr-279) is a Phosphotyrosine. Low complexity predominate over residues 405-415 (SSHNSRSSSSS). The disordered stretch occupies residues 405–438 (SSHNSRSSSSSDTSECYTDSGRKRKRKGLKGFQQ). Basic residues predominate over residues 426–438 (RKRKRKGLKGFQQ).

In Homo sapiens (Human), this protein is EF-hand calcium-binding domain-containing protein 3 (EFCAB3).